The primary structure comprises 332 residues: Apoptosis-enhancing nuclease (332 aa).

The tract at residues 1–102 (MVPREVPESS…VPREAPSSGP (102 aa)) is disordered. Residues 20–36 (ARRRHKRRSRQHQRFMA) are compositionally biased toward basic residues. The Nucleolar localization signal motif lies at 21 to 29 (RRRHKRRSR). A compositionally biased stretch (polar residues) spans 63–73 (QTPAGTEASGN). In terms of domain architecture, Exonuclease spans 105–261 (YVAIDCEMVG…EDAMTAMELY (157 aa)). The short motif at 160–183 (RQHMHKAIPFQVAQKEILKLLKGK) is the Nuclear localization signal element. The disordered stretch occupies residues 272 to 332 (VASTAKAHPE…EGQGARSAPP (61 aa)). Residues 310-321 (GDTREAQDRQEG) show a composition bias toward basic and acidic residues.

The protein resides in the nucleus. Its subcellular location is the nucleolus. Its function is as follows. Exonuclease with activity against single- and double-stranded DNA and RNA. Mediates p53-induced apoptosis. When induced by p53 following DNA damage, digests double-stranded DNA to form single-stranded DNA and amplifies DNA damage signals, leading to enhancement of apoptosis. The sequence is that of Apoptosis-enhancing nuclease from Rattus norvegicus (Rat).